We begin with the raw amino-acid sequence, 731 residues long: 1,4-alpha-glucan branching enzyme GlgB (731 aa).

The active-site Nucleophile is Asp411. Catalysis depends on Glu464, which acts as the Proton donor.

Belongs to the glycosyl hydrolase 13 family. GlgB subfamily. In terms of assembly, monomer.

The catalysed reaction is Transfers a segment of a (1-&gt;4)-alpha-D-glucan chain to a primary hydroxy group in a similar glucan chain.. The protein operates within glycan biosynthesis; glycogen biosynthesis. Its function is as follows. Catalyzes the formation of the alpha-1,6-glucosidic linkages in glycogen by scission of a 1,4-alpha-linked oligosaccharide from growing alpha-1,4-glucan chains and the subsequent attachment of the oligosaccharide to the alpha-1,6 position. In Mycolicibacterium paratuberculosis (strain ATCC BAA-968 / K-10) (Mycobacterium paratuberculosis), this protein is 1,4-alpha-glucan branching enzyme GlgB.